We begin with the raw amino-acid sequence, 123 residues long: Ribosome-binding factor A (123 aa).

Belongs to the RbfA family. In terms of assembly, monomer. Binds 30S ribosomal subunits, but not 50S ribosomal subunits or 70S ribosomes.

The protein resides in the cytoplasm. Its function is as follows. One of several proteins that assist in the late maturation steps of the functional core of the 30S ribosomal subunit. Associates with free 30S ribosomal subunits (but not with 30S subunits that are part of 70S ribosomes or polysomes). Required for efficient processing of 16S rRNA. May interact with the 5'-terminal helix region of 16S rRNA. This is Ribosome-binding factor A from Lactobacillus gasseri (strain ATCC 33323 / DSM 20243 / BCRC 14619 / CIP 102991 / JCM 1131 / KCTC 3163 / NCIMB 11718 / NCTC 13722 / AM63).